We begin with the raw amino-acid sequence, 409 residues long: All trans-polyprenyl-diphosphate synthase PDSS1 (409 aa).

3 residues coordinate isopentenyl diphosphate: K128, R131, and H167. Mg(2+) is bound by residues D174 and D178. R184 is a binding site for isopentenyl diphosphate.

It belongs to the FPP/GGPP synthase family. As to quaternary structure, heterotetramer composed of 2 PDSS1/DPS1 and 2 PDSS2/DLP1 subunits. It depends on Mg(2+) as a cofactor.

Its subcellular location is the mitochondrion. It carries out the reaction 7 isopentenyl diphosphate + (2E,6E)-farnesyl diphosphate = all-trans-decaprenyl diphosphate + 7 diphosphate. The enzyme catalyses 6 isopentenyl diphosphate + (2E,6E)-farnesyl diphosphate = all-trans-nonaprenyl diphosphate + 6 diphosphate. It participates in cofactor biosynthesis; ubiquinone biosynthesis. Its function is as follows. Heterotetrameric enzyme that catalyzes the condensation of farnesyl diphosphate (FPP), which acts as a primer, and isopentenyl diphosphate (IPP) to produce prenyl diphosphates of varying chain lengths and participates in the determination of the side chain of ubiquinone. Supplies nona and decaprenyl diphosphate, the precursors for the side chain of the isoprenoid quinones ubiquinone-9 (Q9)and ubiquinone-10 (Q10) respectively. The enzyme adds isopentenyl diphosphate molecules sequentially to farnesyl diphosphate with trans stereochemistry. The protein is All trans-polyprenyl-diphosphate synthase PDSS1 of Mus musculus (Mouse).